Consider the following 445-residue polypeptide: Acyl-lipid (7-3)-desaturase (445 aa).

The Cytochrome b5 heme-binding domain occupies 11 to 91 (VAELRAAEVA…MSKFFVGSLD (81 aa)). 2 residues coordinate heme: His-50 and His-73. 2 consecutive transmembrane segments (helical) span residues 126–146 (YWLKAAALVVAAVSIEGYMLL) and 148–168 (GKTLLLSVFLGLVFAWIGLNI). Residues 170-174 (HDANH) carry the Histidine box-1 motif. Residues 205–210 (HVVMHH) carry the Histidine box-2 motif. A run of 3 helical transmembrane segments spans residues 247–267 (ILPGEAMYAFKLLFLDALELL), 283–303 (LFAPAVACKLGFWARFVALPL), and 312–332 (ALCICATVCTGSFYLAFFFFI). The Histidine box-3 motif lies at 380–384 (QIEHH).

It belongs to the fatty acid desaturase type 1 family. Requires Fe(2+) as cofactor.

Its subcellular location is the membrane. It carries out the reaction a (7Z,10Z,13Z,16Z,19Z)-docosapentaenoyl-containing glycerolipid + 2 Fe(II)-[cytochrome b5] + O2 + 2 H(+) = a (4Z,7Z,10Z,13Z,16Z,19Z)-docosahexaenoyl-containing glycerolipid + 2 Fe(III)-[cytochrome b5] + 2 H2O. It catalyses the reaction a (7Z,10Z,13Z,16Z)-docosatetraenoyl-containing glycerolipid + 2 Fe(II)-[cytochrome b5] + O2 + 2 H(+) = a (4Z,7Z,10Z,13Z,16Z)-docosapentaenoyl-containing glycerolipid + 2 Fe(III)-[cytochrome b5] + 2 H2O. In terms of biological role, fatty acid desaturase that introduces a cis double bond at the 4-position in 22-carbon polyunsaturated fatty acids that contain a Delta(7) double bond, resulting in the production of delta-4 desaturated fatty acid docosahexanoic acid (DHA). Mediates desaturation of 22:5n-3 and 22:4n-6 into 22:6n-3 and 22:5n-6 respectively. The sequence is that of Acyl-lipid (7-3)-desaturase from Diacronema lutheri (Unicellular marine alga).